A 1097-amino-acid chain; its full sequence is DNA-directed RNA polymerase subunit beta (1097 aa).

The interval 1073–1097 (DVNPRRSTPSRPTYESLGVADYDED) is disordered.

It belongs to the RNA polymerase beta chain family. As to quaternary structure, in cyanobacteria the RNAP catalytic core is composed of 2 alpha, 1 beta, 1 beta', 1 gamma and 1 omega subunit. When a sigma factor is associated with the core the holoenzyme is formed, which can initiate transcription.

It carries out the reaction RNA(n) + a ribonucleoside 5'-triphosphate = RNA(n+1) + diphosphate. DNA-dependent RNA polymerase catalyzes the transcription of DNA into RNA using the four ribonucleoside triphosphates as substrates. The sequence is that of DNA-directed RNA polymerase subunit beta from Synechococcus sp. (strain CC9311).